Here is a 22-residue protein sequence, read N- to C-terminus: Major outer membrane protein (22 aa).

The protein belongs to the Gram-negative porin family. As to quaternary structure, disulfide bond interactions within and between MOMP molecules and other components form high molecular-weight oligomers.

Its subcellular location is the cell outer membrane. In terms of biological role, structural rigidity of the outer membrane of elementary bodies and porin forming, permitting diffusion of solutes through the intracellular reticulate body membrane. The protein is Major outer membrane protein (ompH) of Avibacterium gallinarum (Pasteurella gallinarum).